Reading from the N-terminus, the 477-residue chain is 3-isopropylmalate dehydratase large subunit 1 (477 aa).

Positions 357, 417, and 420 each coordinate [4Fe-4S] cluster.

It belongs to the aconitase/IPM isomerase family. LeuC type 1 subfamily. In terms of assembly, heterodimer of LeuC and LeuD. [4Fe-4S] cluster serves as cofactor.

It carries out the reaction (2R,3S)-3-isopropylmalate = (2S)-2-isopropylmalate. Its pathway is amino-acid biosynthesis; L-leucine biosynthesis; L-leucine from 3-methyl-2-oxobutanoate: step 2/4. Its function is as follows. Catalyzes the isomerization between 2-isopropylmalate and 3-isopropylmalate, via the formation of 2-isopropylmaleate. This Bradyrhizobium diazoefficiens (strain JCM 10833 / BCRC 13528 / IAM 13628 / NBRC 14792 / USDA 110) protein is 3-isopropylmalate dehydratase large subunit 1.